The sequence spans 410 residues: Regulator of microtubule dynamics protein 2 (410 aa).

Residues 9–28 (LILGIMAGTAGISLLAFWYH) traverse the membrane as a helical segment. At Ser51 the chain carries Phosphoserine. Residues 69-110 (QRRQLQILEKLNELLTNMEELKEEIRFLKETIPKLEECIQDE) adopt a coiled-coil conformation. The disordered stretch occupies residues 120-151 (ISPQHRARKKKGTTVQRSATSNSSEEAESEGG). The residue at position 121 (Ser121) is a Phosphoserine. Basic residues predominate over residues 121-131 (SPQHRARKKKG). Thr139 is subject to Phosphothreonine. Tyr152 carries the post-translational modification Phosphotyrosine. 2 positions are modified to phosphothreonine: Thr154 and Thr157.

Belongs to the RMDN family. Interacts with microtubules.

The protein resides in the membrane. It is found in the cytoplasm. It localises to the cytoskeleton. The protein localises to the spindle. Its subcellular location is the spindle pole. This Mus musculus (Mouse) protein is Regulator of microtubule dynamics protein 2 (Rmdn2).